The primary structure comprises 246 residues: ABC transporter ATP-binding protein NatA (246 aa).

One can recognise an ABC transporter domain in the interval 2–237 (ITLTDCSRRF…ERSEDLNYIF (236 aa)). 38–45 (GENGAGKT) contacts ATP.

This sequence belongs to the ABC transporter superfamily. As to quaternary structure, the complex is composed of NatA and NatB.

The catalysed reaction is Na(+)(in) + ATP + H2O = Na(+)(out) + ADP + phosphate + H(+). Part of an ABC transporter that catalyzes ATP-dependent electrogenic sodium extrusion. The protein is ABC transporter ATP-binding protein NatA of Bacillus subtilis (strain 168).